The sequence spans 102 residues: PqqA binding protein (102 aa).

The protein belongs to the PqqD family. Monomer. Interacts with PqqE.

It functions in the pathway cofactor biosynthesis; pyrroloquinoline quinone biosynthesis. Its function is as follows. Functions as a PqqA binding protein and presents PqqA to PqqE, in the pyrroloquinoline quinone (PQQ) biosynthetic pathway. This is PqqA binding protein from Rhodopseudomonas palustris (strain ATCC BAA-98 / CGA009).